The primary structure comprises 181 residues: ADP-ribosylation factor 1 (181 aa).

A lipid anchor (N-myristoyl glycine) is attached at Gly-2. GTP contacts are provided by residues 24–31 (GLDAAGKT), 67–71 (DVGGQ), and 126–129 (NKQD).

It belongs to the small GTPase superfamily. Arf family.

It localises to the golgi apparatus. The catalysed reaction is GTP + H2O = GDP + phosphate + H(+). GTP-binding protein involved in protein trafficking; may modulate vesicle budding and uncoating within the Golgi apparatus. The polypeptide is ADP-ribosylation factor 1 (ARF1) (Catharanthus roseus (Madagascar periwinkle)).